The primary structure comprises 545 residues: CTP synthase (545 aa).

Positions 1 to 266 are amidoligase domain; that stretch reads MTTRYIFVTG…DDLVVKRFGL (266 aa). Serine 14 contacts CTP. Serine 14 contributes to the UTP binding site. ATP is bound by residues 15 to 20 and aspartate 72; that span reads SLGKGI. Mg(2+) is bound by residues aspartate 72 and glutamate 140. CTP is bound by residues 147 to 149, 187 to 192, and lysine 223; these read DIE and KTKPTQ. UTP is bound by residues 187 to 192 and lysine 223; that span reads KTKPTQ. 239–241 serves as a coordination point for ATP; the sequence is KDV. The Glutamine amidotransferase type-1 domain occupies 291 to 542; sequence VIGMVGKYIE…IAAASAHQKR (252 aa). Glycine 352 contacts L-glutamine. The active-site Nucleophile; for glutamine hydrolysis is cysteine 379. L-glutamine contacts are provided by residues 380 to 383, glutamate 403, and arginine 470; that span reads LGMQ. Catalysis depends on residues histidine 515 and glutamate 517.

Belongs to the CTP synthase family. Homotetramer.

It carries out the reaction UTP + L-glutamine + ATP + H2O = CTP + L-glutamate + ADP + phosphate + 2 H(+). The enzyme catalyses L-glutamine + H2O = L-glutamate + NH4(+). The catalysed reaction is UTP + NH4(+) + ATP = CTP + ADP + phosphate + 2 H(+). It participates in pyrimidine metabolism; CTP biosynthesis via de novo pathway; CTP from UDP: step 2/2. Its activity is regulated as follows. Allosterically activated by GTP, when glutamine is the substrate; GTP has no effect on the reaction when ammonia is the substrate. The allosteric effector GTP functions by stabilizing the protein conformation that binds the tetrahedral intermediate(s) formed during glutamine hydrolysis. Inhibited by the product CTP, via allosteric rather than competitive inhibition. Catalyzes the ATP-dependent amination of UTP to CTP with either L-glutamine or ammonia as the source of nitrogen. Regulates intracellular CTP levels through interactions with the four ribonucleotide triphosphates. This chain is CTP synthase, found in Shewanella putrefaciens (strain CN-32 / ATCC BAA-453).